A 170-amino-acid chain; its full sequence is Phosphopantetheine adenylyltransferase (170 aa).

Position 18 (Thr-18) interacts with substrate. ATP is bound by residues 18-19 (TF) and His-26. Residues Lys-50, Leu-84, and Arg-98 each contribute to the substrate site. Residues 99–101 (GLR), Glu-109, and 134–140 (WIYISSS) each bind ATP.

Belongs to the bacterial CoaD family. In terms of assembly, homohexamer. It depends on Mg(2+) as a cofactor.

The protein localises to the cytoplasm. It catalyses the reaction (R)-4'-phosphopantetheine + ATP + H(+) = 3'-dephospho-CoA + diphosphate. It functions in the pathway cofactor biosynthesis; coenzyme A biosynthesis; CoA from (R)-pantothenate: step 4/5. Its function is as follows. Reversibly transfers an adenylyl group from ATP to 4'-phosphopantetheine, yielding dephospho-CoA (dPCoA) and pyrophosphate. This is Phosphopantetheine adenylyltransferase from Desulfotalea psychrophila (strain LSv54 / DSM 12343).